The following is a 71-amino-acid chain: Exodeoxyribonuclease 7 small subunit (71 aa).

The protein belongs to the XseB family. As to quaternary structure, heterooligomer composed of large and small subunits.

The protein resides in the cytoplasm. It carries out the reaction Exonucleolytic cleavage in either 5'- to 3'- or 3'- to 5'-direction to yield nucleoside 5'-phosphates.. In terms of biological role, bidirectionally degrades single-stranded DNA into large acid-insoluble oligonucleotides, which are then degraded further into small acid-soluble oligonucleotides. This chain is Exodeoxyribonuclease 7 small subunit, found in Streptococcus suis (strain 98HAH33).